The chain runs to 657 residues: Pentatricopeptide repeat-containing protein At5g44230 (657 aa).

PPR repeat units follow at residues 45 to 79, 80 to 112, 113 to 147, 148 to 178, 183 to 213, 214 to 244, 245 to 279, 280 to 314, 317 to 347, 348 to 383, 384 to 419, and 420 to 450; these read KELL…GLDQ, SCYI…VQFR, NPFL…EITP, VSFT…TFRL, FVYV…MPER, DVIS…LPTK, DMVA…GIRA, DEVT…GYSP, HVVI…MNNK, NVFT…EIKP, NTVT…GVQP, and TRDH…MSVE. The type E motif stretch occupies residues 455 to 530; that stretch reads VWGALLGACR…TPAVSWVVDK (76 aa). A type E(+) motif region spans residues 532–562; the sequence is GQMHKFFPGNLNHPMSNKIQDKLEELVERLT. Positions 563–657 are type DYW motif; sequence VLGYQPDLSS…SGDCSCGDFW (95 aa).

Belongs to the PPR family. PCMP-H subfamily.

This Arabidopsis thaliana (Mouse-ear cress) protein is Pentatricopeptide repeat-containing protein At5g44230 (PCMP-H17).